Here is a 231-residue protein sequence, read N- to C-terminus: 6-hydroxymethyl-7,8-dihydropterin pyrophosphokinase (231 aa).

Belongs to the archaeal 6-HMPDK family. Requires Mg(2+) as cofactor.

It carries out the reaction 6-hydroxymethyl-7,8-dihydropterin + ATP = (7,8-dihydropterin-6-yl)methyl diphosphate + AMP + H(+). Catalyzes the transfer of diphosphate from ATP to 6-hydroxymethyl-7,8-dihydropterin (6-HMD), leading to 6-hydroxymethyl-7,8-dihydropterin diphosphate (6-HMDP). To a lesser extent, can also use CTP, UTP, and GTP as the nucleotide triphosphate substrate. This Pyrococcus furiosus (strain ATCC 43587 / DSM 3638 / JCM 8422 / Vc1) protein is 6-hydroxymethyl-7,8-dihydropterin pyrophosphokinase.